Reading from the N-terminus, the 339-residue chain is Cathepsin B (339 aa).

The first 17 residues, 1 to 17, serve as a signal peptide directing secretion; that stretch reads MWWSLIPLSCLLALTSA. Residues 18 to 79 constitute a propeptide, activation peptide; it reads HDKPSSHPLS…ERVGFSEDIN (62 aa). 6 cysteine pairs are disulfide-bonded: Cys93–Cys122, Cys105–Cys150, Cys141–Cys207, Cys142–Cys146, Cys179–Cys211, and Cys187–Cys198. Residue Cys108 is part of the active site. Residue Asn192 is glycosylated (N-linked (GlcNAc...) asparagine). Lys220 carries the N6-acetyllysine modification. Catalysis depends on residues His278 and Asn298. The propeptide occupies 334-339; sequence QYWGRF.

Belongs to the peptidase C1 family. Dimer of a heavy chain and a light chain cross-linked by a disulfide bond. Interacts with SRPX2. Directly interacts with SHKBP1. In terms of tissue distribution, expressed in the epithelial cells of the prostate and mammary gland.

Its subcellular location is the lysosome. The protein resides in the melanosome. It localises to the secreted. The protein localises to the extracellular space. It is found in the apical cell membrane. It carries out the reaction Hydrolysis of proteins with broad specificity for peptide bonds. Preferentially cleaves -Arg-Arg-|-Xaa bonds in small molecule substrates (thus differing from cathepsin L). In addition to being an endopeptidase, shows peptidyl-dipeptidase activity, liberating C-terminal dipeptides.. Thiol protease which is believed to participate in intracellular degradation and turnover of proteins. Cleaves matrix extracellular phosphoglycoprotein MEPE. Involved in the solubilization of cross-linked TG/thyroglobulin in the thyroid follicle lumen. Has also been implicated in tumor invasion and metastasis. The protein is Cathepsin B (Ctsb) of Rattus norvegicus (Rat).